Consider the following 423-residue polypeptide: Glutamate-1-semialdehyde 2,1-aminomutase (423 aa).

Lys-262 carries the N6-(pyridoxal phosphate)lysine modification.

It belongs to the class-III pyridoxal-phosphate-dependent aminotransferase family. HemL subfamily. Homodimer. It depends on pyridoxal 5'-phosphate as a cofactor.

Its subcellular location is the cytoplasm. The catalysed reaction is (S)-4-amino-5-oxopentanoate = 5-aminolevulinate. The protein operates within porphyrin-containing compound metabolism; protoporphyrin-IX biosynthesis; 5-aminolevulinate from L-glutamyl-tRNA(Glu): step 2/2. The protein is Glutamate-1-semialdehyde 2,1-aminomutase of Campylobacter fetus subsp. fetus (strain 82-40).